The primary structure comprises 251 residues: CCN family member 5 (251 aa).

The signal sequence occupies residues 1 to 23 (MRGNPLIHLLAISFLCILSMVYS). An IGFBP N-terminal domain is found at 24–103 (QLCPAPCACP…EEDDGSCEVN (80 aa)). Cystine bridges form between cysteine 26–cysteine 50, cysteine 30–cysteine 52, cysteine 32–cysteine 53, cysteine 39–cysteine 56, cysteine 64–cysteine 78, and cysteine 70–cysteine 100. In terms of domain architecture, VWFC spans 98–164 (GSCEVNGRRY…GRCCPEWVCD (67 aa)). Residues 195–239 (CPNWSTAWGPCSTTCGLGIATRVSNQNRFCQLEIQRRLCLSRPCL) form the TSP type-1 domain. An N-linked (GlcNAc...) asparagine glycan is attached at asparagine 197.

Belongs to the CCN family.

It localises to the secreted. Its function is as follows. May play an important role in modulating bone turnover. Promotes the adhesion of osteoblast cells and inhibits the binding of fibrinogen to integrin receptors. In addition, inhibits osteocalcin production. In Mus musculus (Mouse), this protein is CCN family member 5 (Ccn5).